The chain runs to 132 residues: L-ectoine synthase (132 aa).

Belongs to the ectoine synthase family.

The enzyme catalyses (2S)-4-acetamido-2-aminobutanoate = L-ectoine + H2O. It participates in amine and polyamine biosynthesis; ectoine biosynthesis; L-ectoine from L-aspartate 4-semialdehyde: step 3/3. In terms of biological role, catalyzes the circularization of gamma-N-acetyl-alpha,gamma-diaminobutyric acid (ADABA) to ectoine (1,4,5,6-tetrahydro-2-methyl-4-pyrimidine carboxylic acid), which is an excellent osmoprotectant. This Teredinibacter turnerae (strain ATCC 39867 / T7901) protein is L-ectoine synthase.